Here is a 457-residue protein sequence, read N- to C-terminus: Squalene epoxidase erg1 (457 aa).

FAD contacts are provided by residues Ile15–Thr16, Glu35–Arg36, Arg43, Arg114, Val130, Asp293, and Met306. A run of 3 helical transmembrane segments spans residues Gly347–Thr364, Phe409–Met429, and Ile433–Ser453.

Belongs to the squalene monooxygenase family. Requires FAD as cofactor.

The protein resides in the microsome membrane. Its subcellular location is the endoplasmic reticulum membrane. It is found in the vacuole membrane. The enzyme catalyses squalene + reduced [NADPH--hemoprotein reductase] + O2 = (S)-2,3-epoxysqualene + oxidized [NADPH--hemoprotein reductase] + H2O + H(+). It participates in terpene metabolism; lanosterol biosynthesis; lanosterol from farnesyl diphosphate: step 2/3. It functions in the pathway steroid metabolism; ergosterol biosynthesis. With respect to regulation, activity is blocked by the allylamine class antifungal terbinafine. Squalene epoxidase; part of the third module of ergosterol biosynthesis pathway that includes by the late steps of the pathway. Erg1 catalyzes the epoxidation of squalene into 2,3-epoxysqualene. The third module or late pathway involves the ergosterol synthesis itself through consecutive reactions that mainly occur in the endoplasmic reticulum (ER) membrane. Firstly, the squalene synthase erg9 catalyzes the condensation of 2 farnesyl pyrophosphate moieties to form squalene, which is the precursor of all steroids. Secondly, squalene is converted into lanosterol by the consecutive action of the squalene epoxidase erg1 and the lanosterol synthase erg7. The lanosterol 14-alpha-demethylase erg11/cyp1 catalyzes C14-demethylation of lanosterol to produce 4,4'-dimethyl cholesta-8,14,24-triene-3-beta-ol. In the next steps, a complex process involving various demethylation, reduction and desaturation reactions catalyzed by the C-14 reductase erg24 and the C-4 demethylation complex erg25-erg26-erg27 leads to the production of zymosterol. Erg28 likely functions in the C-4 demethylation complex reaction by tethering erg26 and Erg27 to the endoplasmic reticulum or to facilitate interaction between these proteins. Then, the sterol 24-C-methyltransferase erg6 catalyzes the methyl transfer from S-adenosyl-methionine to the C-24 of zymosterol to form fecosterol. The C-8 sterol isomerase erg2 catalyzes the reaction which results in unsaturation at C-7 in the B ring of sterols and thus converts fecosterol to episterol. The sterol-C5-desaturases erg31 and erg32 then catalyze the introduction of a C-5 double bond in the B ring to produce 5-dehydroepisterol. The C-22 sterol desaturase erg5 further converts 5-dehydroepisterol into ergosta-5,7,22,24(28)-tetraen-3beta-ol by forming the C-22(23) double bond in the sterol side chain. Finally, ergosta-5,7,22,24(28)-tetraen-3beta-ol is substrate of the C-24(28) sterol reductase erg4 to produce ergosterol. In the genus Schizosaccharomyces, a second route exists between lanosterol and fecosterol, via the methylation of lanosterol to eburicol by erg6, followed by C14-demethylation by erg11/cyp1 and C4-demethylation by the demethylation complex erg25-erg26-erg27. This chain is Squalene epoxidase erg1, found in Schizosaccharomyces pombe (strain 972 / ATCC 24843) (Fission yeast).